A 370-amino-acid polypeptide reads, in one-letter code: Phospho-N-acetylmuramoyl-pentapeptide-transferase (370 aa).

10 consecutive transmembrane segments (helical) span residues 3 to 23, 54 to 74, 79 to 99, 118 to 138, 161 to 181, 197 to 217, 238 to 258, 262 to 282, 290 to 310, and 341 to 361; these read QIIIAGAVSFLVAIFTTPVLI, GLAILAGILVAYVVAGLYGLL, AFTASGLLVLGLTLGLGAVGF, AKLISQLVLALLFGFLVLRFP, LAVGGTVIGTIVFLIFMYILI, LAAGVTAIVMGSYSLMTFWQF, LAVLAAAGLGGCLGFLWWNAA, IFMGDTGSLALGGLVAGISVT, IIIGALFVIETVSVVIQIVVF, and FWLLAAMAAMAGVAIFYGDWL.

Belongs to the glycosyltransferase 4 family. MraY subfamily. The cofactor is Mg(2+).

It localises to the cell membrane. It carries out the reaction UDP-N-acetyl-alpha-D-muramoyl-L-alanyl-gamma-D-glutamyl-meso-2,6-diaminopimeloyl-D-alanyl-D-alanine + di-trans,octa-cis-undecaprenyl phosphate = di-trans,octa-cis-undecaprenyl diphospho-N-acetyl-alpha-D-muramoyl-L-alanyl-D-glutamyl-meso-2,6-diaminopimeloyl-D-alanyl-D-alanine + UMP. The protein operates within cell wall biogenesis; peptidoglycan biosynthesis. Functionally, catalyzes the initial step of the lipid cycle reactions in the biosynthesis of the cell wall peptidoglycan: transfers peptidoglycan precursor phospho-MurNAc-pentapeptide from UDP-MurNAc-pentapeptide onto the lipid carrier undecaprenyl phosphate, yielding undecaprenyl-pyrophosphoryl-MurNAc-pentapeptide, known as lipid I. In Corynebacterium aurimucosum (strain ATCC 700975 / DSM 44827 / CIP 107346 / CN-1) (Corynebacterium nigricans), this protein is Phospho-N-acetylmuramoyl-pentapeptide-transferase.